The following is a 174-amino-acid chain: Elongation factor Tu, mitochondrial (174 aa).

62–66 (DCPGH) contributes to the GTP binding site. At Lys-78 the chain carries N6-succinyllysine. Thr-103 is modified (phosphothreonine). At Ser-121 the chain carries Phosphoserine. Lys-161 carries the post-translational modification N6-acetyllysine.

This sequence belongs to the GTP-binding elongation factor family. EF-Tu/EF-1A subfamily.

The protein resides in the mitochondrion. It catalyses the reaction GTP + H2O = GDP + phosphate + H(+). Functionally, GTP hydrolase that promotes the GTP-dependent binding of aminoacyl-tRNA to the A-site of ribosomes during protein biosynthesis. The protein is Elongation factor Tu, mitochondrial of Mesocricetus auratus (Golden hamster).